The sequence spans 167 residues: UPF0254 protein MJ1251 (167 aa).

This sequence belongs to the UPF0254 family.

The protein is UPF0254 protein MJ1251 of Methanocaldococcus jannaschii (strain ATCC 43067 / DSM 2661 / JAL-1 / JCM 10045 / NBRC 100440) (Methanococcus jannaschii).